The primary structure comprises 290 residues: Ribonuclease HIII (290 aa).

In terms of domain architecture, RNase H type-2 spans 78–290 (LPLIGTDEVG…FKNTEKAKNA (213 aa)). D84, E85, and D187 together coordinate a divalent metal cation.

Belongs to the RNase HII family. RnhC subfamily. Requires Mn(2+) as cofactor. Mg(2+) is required as a cofactor.

The protein localises to the cytoplasm. The catalysed reaction is Endonucleolytic cleavage to 5'-phosphomonoester.. Functionally, endonuclease that specifically degrades the RNA of RNA-DNA hybrids. This is Ribonuclease HIII from Streptococcus pneumoniae (strain P1031).